A 122-amino-acid chain; its full sequence is Large ribosomal subunit protein uL14 (122 aa).

This sequence belongs to the universal ribosomal protein uL14 family. Part of the 50S ribosomal subunit. Forms a cluster with proteins L3 and L19. In the 70S ribosome, L14 and L19 interact and together make contacts with the 16S rRNA in bridges B5 and B8.

Functionally, binds to 23S rRNA. Forms part of two intersubunit bridges in the 70S ribosome. The sequence is that of Large ribosomal subunit protein uL14 from Picosynechococcus sp. (strain ATCC 27264 / PCC 7002 / PR-6) (Agmenellum quadruplicatum).